The following is a 494-amino-acid chain: Ribitol 5-phosphate transferase FKRP (494 aa).

Over 1–6 the chain is Cytoplasmic; the sequence is MRLTRC. A helical transmembrane segment spans residues 7-29; the sequence is WAALAAAIILNLLVFFYVSWLQH. The Lumenal segment spans residues 30–494; it reads QPRNSRARGP…NPALLSLTGG (465 aa). An intrachain disulfide couples cysteine 168 to cysteine 191. Asparagine 172 and asparagine 209 each carry an N-linked (GlcNAc...) asparagine glycan. Zn(2+) contacts are provided by cysteine 289, cysteine 296, cysteine 317, and cysteine 318. The zinc finger loop stretch occupies residues 289 to 318; sequence CSKESARCFGTVAGDTPAYLYEGRWTPPCC. Positions 345 and 352 each coordinate CDP-L-ribitol. CDP-L-ribitol stretches follow at residues 359 to 364, 437 to 438, and 480 to 482; these read WDYDVD, QD, and NPE. Positions 360, 362, and 364 each coordinate Mg(2+).

The protein belongs to the LicD transferase family. As to quaternary structure, homodimer; disulfide-linked. Forms a complex composed of FKRP, FKTN/fukutin, and RXYLT1/TMEM5. Also exists as large multimeric protein complexes. May interact with the dystrophin-glycoprotein complex (DGC). N-glycosylated. In terms of tissue distribution, expressed in the retina, specifically in the inner segments of the photoreceptors, the outer plexiform layers, inner nuclear layers, and ganglion cell layers (at protein level). Expressed at highest levels in brain, lung, heart, kidney and liver.

It localises to the golgi apparatus membrane. Its subcellular location is the secreted. The protein localises to the cell membrane. The protein resides in the sarcolemma. It is found in the rough endoplasmic reticulum. It localises to the cytoplasm. The enzyme catalyses 3-O-[Rib-ol-P-3-beta-D-GalNAc-(1-&gt;3)-beta-D-GlcNAc-(1-&gt;4)-(O-6-P-alpha-D-Man)]-Thr-[protein] + CDP-L-ribitol = 3-O-[Rib-ol-P-Rib-ol-P-3-beta-D-GalNAc-(1-&gt;3)-beta-D-GlcNAc-(1-&gt;4)-(O-6-P-alpha-D-Man)]-Thr-[protein] + CMP + H(+). It functions in the pathway protein modification; protein glycosylation. In terms of biological role, catalyzes the transfer of CDP-ribitol to ribitol 5-phosphate previously attached by FKTN/fukutin of to the phosphorylated O-mannosyl trisaccharide (N-acetylgalactosamine-beta-3-N-acetylglucosamine-beta-4-(phosphate-6-)mannose), a carbohydrate structure present in alpha-dystroglycan (DAG1). This constitutes the second step in the formation of the ribose 5-phosphate tandem repeat which links the phosphorylated O-mannosyl trisaccharide to the ligand binding moiety composed of repeats of 3-xylosyl-alpha-1,3-glucuronic acid-beta-1. The sequence is that of Ribitol 5-phosphate transferase FKRP from Mus musculus (Mouse).